Here is a 238-residue protein sequence, read N- to C-terminus: Large ribosomal subunit protein uL2 (238 aa).

Residues 1–11 show a composition bias toward polar residues; it reads MGKRLISQNRG. Disordered regions lie at residues 1–22 and 202–223; these read MGKR…APSH and FGGG…APPG.

This sequence belongs to the universal ribosomal protein uL2 family. In terms of assembly, part of the 50S ribosomal subunit. Forms a bridge to the 30S subunit in the 70S ribosome.

Functionally, one of the primary rRNA binding proteins. Required for association of the 30S and 50S subunits to form the 70S ribosome, for tRNA binding and peptide bond formation. It has been suggested to have peptidyltransferase activity; this is somewhat controversial. Makes several contacts with the 16S rRNA in the 70S ribosome. In Methanosarcina acetivorans (strain ATCC 35395 / DSM 2834 / JCM 12185 / C2A), this protein is Large ribosomal subunit protein uL2.